The sequence spans 241 residues: Large ribosomal subunit protein uL2 (241 aa).

The span at 1–12 shows a compositional bias: basic residues; it reads MGKRLISQRRGR. Disordered regions lie at residues 1–21 and 200–241; these read MGKR…RSAS and AVDH…GKRR.

This sequence belongs to the universal ribosomal protein uL2 family. Part of the 50S ribosomal subunit. Forms a bridge to the 30S subunit in the 70S ribosome.

One of the primary rRNA binding proteins. Required for association of the 30S and 50S subunits to form the 70S ribosome, for tRNA binding and peptide bond formation. It has been suggested to have peptidyltransferase activity; this is somewhat controversial. Makes several contacts with the 16S rRNA in the 70S ribosome. This is Large ribosomal subunit protein uL2 from Methanothermobacter thermautotrophicus (strain ATCC 29096 / DSM 1053 / JCM 10044 / NBRC 100330 / Delta H) (Methanobacterium thermoautotrophicum).